Consider the following 135-residue polypeptide: Large ribosomal subunit protein uL22 (135 aa).

The protein belongs to the universal ribosomal protein uL22 family. As to quaternary structure, part of the 50S ribosomal subunit.

Its function is as follows. This protein binds specifically to 23S rRNA; its binding is stimulated by other ribosomal proteins, e.g. L4, L17, and L20. It is important during the early stages of 50S assembly. It makes multiple contacts with different domains of the 23S rRNA in the assembled 50S subunit and ribosome. In terms of biological role, the globular domain of the protein is located near the polypeptide exit tunnel on the outside of the subunit, while an extended beta-hairpin is found that lines the wall of the exit tunnel in the center of the 70S ribosome. The polypeptide is Large ribosomal subunit protein uL22 (Malacoplasma penetrans (strain HF-2) (Mycoplasma penetrans)).